The primary structure comprises 312 residues: Ornithine carbamoyltransferase (312 aa).

Residues 50–53, glutamine 77, arginine 101, and 128–131 contribute to the carbamoyl phosphate site; these read STRT and HPCQ. Residues asparagine 159, aspartate 223, and 227–228 contribute to the L-ornithine site; that span reads SM. Carbamoyl phosphate contacts are provided by residues 263–264 and arginine 291; that span reads CL.

The protein belongs to the aspartate/ornithine carbamoyltransferase superfamily. OTCase family.

It is found in the cytoplasm. It catalyses the reaction carbamoyl phosphate + L-ornithine = L-citrulline + phosphate + H(+). It participates in amino-acid biosynthesis; L-arginine biosynthesis; L-arginine from L-ornithine and carbamoyl phosphate: step 1/3. Reversibly catalyzes the transfer of the carbamoyl group from carbamoyl phosphate (CP) to the N(epsilon) atom of ornithine (ORN) to produce L-citrulline. This chain is Ornithine carbamoyltransferase, found in Acidothermus cellulolyticus (strain ATCC 43068 / DSM 8971 / 11B).